Here is a 196-residue protein sequence, read N- to C-terminus: ATP-dependent Clp protease proteolytic subunit (196 aa).

Residue Ser101 is the Nucleophile of the active site. His126 is a catalytic residue.

The protein belongs to the peptidase S14 family. In terms of assembly, component of the chloroplastic Clp protease core complex.

Its subcellular location is the plastid. The protein localises to the chloroplast stroma. The catalysed reaction is Hydrolysis of proteins to small peptides in the presence of ATP and magnesium. alpha-casein is the usual test substrate. In the absence of ATP, only oligopeptides shorter than five residues are hydrolyzed (such as succinyl-Leu-Tyr-|-NHMec, and Leu-Tyr-Leu-|-Tyr-Trp, in which cleavage of the -Tyr-|-Leu- and -Tyr-|-Trp bonds also occurs).. Its function is as follows. Cleaves peptides in various proteins in a process that requires ATP hydrolysis. Has a chymotrypsin-like activity. Plays a major role in the degradation of misfolded proteins. The polypeptide is ATP-dependent Clp protease proteolytic subunit (Panax ginseng (Korean ginseng)).